The following is a 348-amino-acid chain: Trace amine-associated receptor 9 (348 aa).

At 1–33 (MVNNFSQAEAVELCYKNVNESCIKTPYSPGPRS) the chain is on the extracellular side. N4 and N19 each carry an N-linked (GlcNAc...) asparagine glycan. 2 disulfide bridges follow: C22-C186 and C105-C190. Residues 34 to 58 (ILYAVLGFGAVLAAFGNLLVMIAIL) form a helical membrane-spanning segment. At 59 to 68 (HFKQLHTPTN) the chain is on the cytoplasmic side. A helical transmembrane segment spans residues 69–90 (FLIASLACADFLVGVTVMPFST). Over 91–105 (VRSVESCWYFGDSYC) the chain is Extracellular. The chain crosses the membrane as a helical span at residues 106–128 (KFHTCFDTSFCFASLFHLCCISV). Residues D112 and T113 each coordinate spermidine. Over 129-148 (DRYIAVTDPLTYPTKFTVSV) the chain is Cytoplasmic. A helical transmembrane segment spans residues 149–170 (SGICIVLSWFFSVTYSFSIFYT). The Extracellular portion of the chain corresponds to 171–196 (GANEEGIEELVVALTCVGGCQAPLNQ). Residues 174–187 (EEGIEELVVALTCV) form an extracellular Loop 2 (ECL2) region. A helical membrane pass occupies residues 197–218 (NWVLLCFLLFFIPNVAMVFIYS). Topologically, residues 219–256 (KIFLVAKHQARKIESTASQAQSSSESYKERVAKRERKA) are cytoplasmic. Residues 257-280 (AKTLGIAMAAFLVSWLPYLVDAVI) form a helical membrane-spanning segment. The Extracellular segment spans residues 281-293 (DAYMNFITPPYVY). The chain crosses the membrane as a helical span at residues 294–314 (EILVWCVYYNSAMNPLIYAFF). Residues 315–348 (YQWFGKAIKLIVSGKVLRTDSSTTNLFSEEVETD) lie on the Cytoplasmic side of the membrane.

This sequence belongs to the G-protein coupled receptor 1 family.

The protein localises to the cell membrane. Its function is as follows. Olfactory receptor specific for trace amines, such as N,N-dimethylcyclohexylamine (DMCHA) and beta-phenylethylamine (beta-PEA). In contrast to mouse and rat orthologs, not activated by triethylamine, cadaverine (CAD) or spermidine. Trace amine compounds are enriched in animal body fluids and act on trace amine-associated receptors (TAARs) to elicit both intraspecific and interspecific innate behaviors. Trace amine-binding causes a conformation change that triggers signaling via G(s)-class of G alpha proteins (GNAL or GNAS). In mature olfactory sensory neurons, TAAR9 is coupled with GNAL/G(olf)G alpha protein and mediates activation of adenylate cyclase activity to activate cAMP signaling and eventually transmit odorant signals to achieve membrane depolarization. In immature olfactory sensory neurons, TAAR9 is coupled with GNAS/G(s) G alpha proteins. The polypeptide is Trace amine-associated receptor 9 (Homo sapiens (Human)).